A 372-amino-acid polypeptide reads, in one-letter code: 4-hydroxy-3-methylbut-2-en-1-yl diphosphate synthase (flavodoxin) (372 aa).

[4Fe-4S] cluster is bound by residues Cys270, Cys273, Cys305, and Glu312.

This sequence belongs to the IspG family. Requires [4Fe-4S] cluster as cofactor.

The enzyme catalyses (2E)-4-hydroxy-3-methylbut-2-enyl diphosphate + oxidized [flavodoxin] + H2O + 2 H(+) = 2-C-methyl-D-erythritol 2,4-cyclic diphosphate + reduced [flavodoxin]. The protein operates within isoprenoid biosynthesis; isopentenyl diphosphate biosynthesis via DXP pathway; isopentenyl diphosphate from 1-deoxy-D-xylulose 5-phosphate: step 5/6. Functionally, converts 2C-methyl-D-erythritol 2,4-cyclodiphosphate (ME-2,4cPP) into 1-hydroxy-2-methyl-2-(E)-butenyl 4-diphosphate. The sequence is that of 4-hydroxy-3-methylbut-2-en-1-yl diphosphate synthase (flavodoxin) from Alteromonas mediterranea (strain DSM 17117 / CIP 110805 / LMG 28347 / Deep ecotype).